The chain runs to 479 residues: Serine--tRNA ligase, mitochondrial (479 aa).

The transit peptide at 1–42 (MRLTNRRFSTFLGNALPSKKKGFIFMSQLLYLRTFSTHTSYL) directs the protein to the mitochondrion. 287–289 (TAE) is a binding site for L-serine. 317-319 (RRE) is an ATP binding site. Residue glutamate 340 coordinates L-serine. 404–407 (EITS) provides a ligand contact to ATP. Threonine 438 is an L-serine binding site.

Belongs to the class-II aminoacyl-tRNA synthetase family. Type-1 seryl-tRNA synthetase subfamily. Homodimer. The tRNA molecule probably binds across the dimer.

The protein resides in the mitochondrion matrix. It catalyses the reaction tRNA(Ser) + L-serine + ATP = L-seryl-tRNA(Ser) + AMP + diphosphate + H(+). In terms of biological role, catalyzes the attachment of serine to tRNA(Ser). Is also probably able to aminoacylate tRNA(Sec) with serine, to form the misacylated tRNA L-seryl-tRNA(Sec), which will be further converted into selenocysteinyl-tRNA(Sec). The polypeptide is Serine--tRNA ligase, mitochondrial (dia4) (Schizosaccharomyces pombe (strain 972 / ATCC 24843) (Fission yeast)).